The sequence spans 644 residues: Prolyl 3,4-dihydroxylase TPA1 (644 aa).

Residues 141-247 enclose the Fe2OG dioxygenase domain; sequence SKTDMSINTY…RLSIQGWYHI (107 aa). Positions 159 and 161 each coordinate Fe cation. Tyrosine 173 contacts 2-oxoglutarate. Residue histidine 227 participates in Fe cation binding. Arginine 238 contacts 2-oxoglutarate. Serine 607 is subject to Phosphoserine.

The protein belongs to the TPA1 family. In terms of assembly, monomer and homodimer. Interacts with FRK1, eRF1 (SUP1), eRF3 (SUP35) and polyadenylate-binding protein PAB1. Interacts with ETT1. It depends on Fe(2+) as a cofactor. Requires L-ascorbate as cofactor.

It is found in the nucleus. The enzyme catalyses [ribosomal protein uS12]-L-proline + 2-oxoglutarate + O2 = [ribosomal protein uS12]-(3S)-3-hydroxy-L-proline + succinate + CO2. It catalyses the reaction [ribosomal protein uS12]-(3S)-3-hydroxy-L-proline + 2-oxoglutarate + O2 = [ribosomal protein uS12]-(3S)-3,4-dihydroxy-L-proline + succinate + CO2. In terms of biological role, prolyl 3,4-dihydroxylase that catalyzes 3,4-dihydroxylation of 'Pro-64' of small ribosomal subunit uS12 (RPS23A and RPS23B), thereby regulating protein translation termination efficiency. Part of a messenger ribonucleoprotein (mRNP) complex at the 3'-UTR of mRNAs. It associates specifically with components of the translation termination complex and is involved in both translation termination and in regulation of normal mRNA decay through translation termination-coupled poly(A) shortening. This chain is Prolyl 3,4-dihydroxylase TPA1, found in Saccharomyces cerevisiae (strain ATCC 204508 / S288c) (Baker's yeast).